A 127-amino-acid chain; its full sequence is uncharacterized protein (127 aa).

The helical transmembrane segment at 85–107 (VYLGKIGFVLLHVFYLSCIAYYD) threads the bilayer.

The protein resides in the mitochondrion membrane. This is an uncharacterized protein from Dictyostelium discoideum (Social amoeba).